The following is a 90-amino-acid chain: Probable Fe(2+)-trafficking protein (90 aa).

Belongs to the Fe(2+)-trafficking protein family.

Functionally, could be a mediator in iron transactions between iron acquisition and iron-requiring processes, such as synthesis and/or repair of Fe-S clusters in biosynthetic enzymes. The sequence is that of Probable Fe(2+)-trafficking protein from Haemophilus influenzae (strain PittEE).